The sequence spans 471 residues: Argininosuccinate lyase (471 aa).

Belongs to the lyase 1 family. Argininosuccinate lyase subfamily.

It is found in the cytoplasm. The enzyme catalyses 2-(N(omega)-L-arginino)succinate = fumarate + L-arginine. Its pathway is amino-acid biosynthesis; L-arginine biosynthesis; L-arginine from L-ornithine and carbamoyl phosphate: step 3/3. This is Argininosuccinate lyase from Acidiphilium cryptum (strain JF-5).